Consider the following 393-residue polypeptide: MTTSVIVTGARTPIGKLMGSLKDFSASDLGAITIAAALKKANVAPSIVQYVIIGQVLTAGAGQMPARQAAVAAGIGWDVPALTINKMCLSGLDAIALADQLIRAGEFDVVVAGGQESMTKAPHLLMDSRSGYKYGDVTIVDHLAYDGLHDVFTNQPMGALTEQRNDVEKFTRQEQDEFAARSHQKAAAAWKDGVFADEVVPVSIPQSKGDSLQFTEDEGIRANTSAESLAGLKPAFRCGGTITPGSASQISDGAATVVVMNKEKAQQLGLTWLVEIGAHGVVAGPDSTLQSQPANAIKKAVDREGISVEQLDVVEINEAFAAVALASARELGIAPELVNVNGGAIAVGHPLGMSGARITLHVALELARRGSGYGVAALCGAGGQGDALILRAV.

C88 (acyl-thioester intermediate) is an active-site residue. Active-site proton acceptor residues include H349 and C379.

The protein belongs to the thiolase-like superfamily. Thiolase family.

It carries out the reaction 2 acetyl-CoA = acetoacetyl-CoA + CoA. This is Probable acetyl-CoA acetyltransferase (fadA4) from Mycobacterium leprae (strain TN).